Reading from the N-terminus, the 160-residue chain is Major strawberry allergen Fra a 1.08 (160 aa).

The protein belongs to the BetVI family. Post-translationally, phosphorylated in vivo. Phosphorylation prevents its activity as ribonuclease. Highly expressed in roots. Expressed a low levels in ripe red fruits.

Possesses ribonuclease activity in vitro. The polypeptide is Major strawberry allergen Fra a 1.08 (Fragaria ananassa (Strawberry)).